Reading from the N-terminus, the 502-residue chain is MFS-type transporeter aprT (502 aa).

A disordered region spans residues methionine 1–proline 38. Helical transmembrane passes span histidine 45–isoleucine 65, isoleucine 114–alanine 136, valine 150–proline 170, tryptophan 175–tryptophan 195, phenylalanine 214–lysine 234, valine 239–proline 259, valine 302–valine 322, alanine 336–proline 356, valine 380–isoleucine 400, leucine 403–leucine 423, and leucine 464–leucine 484. A glycan (N-linked (GlcNAc...) asparagine) is linked at asparagine 495.

Belongs to the major facilitator superfamily.

It is found in the cell membrane. MFS-rype transporer; part of the gene cluster that mediates the biosynthesis of the asperipin-2a, a bicyclic peptide that possesses two macrocyclic ether rings consisting of 14- and 17-membered paracyclophans. AprT is likely to be involved in the cellular export of asperipin-2a. The protein is MFS-type transporeter aprT of Aspergillus flavus (strain ATCC 200026 / FGSC A1120 / IAM 13836 / NRRL 3357 / JCM 12722 / SRRC 167).